Here is a 379-residue protein sequence, read N- to C-terminus: Acyl-CoA dehydrogenase (379 aa).

This sequence belongs to the acyl-CoA dehydrogenase family. FAD is required as a cofactor.

It carries out the reaction a 2,3-saturated acyl-CoA + A = a 2,3-dehydroacyl-CoA + AH2. This is Acyl-CoA dehydrogenase (mmgC) from Bacillus subtilis (strain 168).